The chain runs to 385 residues: MNRRRKLLIPLLFCGAMLTACDDKSAENTAAMTPEVGVVTLSPGSVNVLSELPGRTVPYEVAEIRPQVGGIIIKRNFIEGDKVNQGDSLYQIDPAPLQAELNSAKGSLAKALSTASNARITFNRQASLLKTNYVSRQDYDTARTQLNEAEANVTVAKAAVEQATINLQYANVTSPITGVSGKSSVTVGALVTANQADSLVTVQRLDPIYVDLTQSVQDFLRMKEEVASGQIKQVQGSTPVQLNLENGKRYSQTGTLKFSDPTVDETTGSVTLRAIFPNPNGDLLPGMYVTALVDEGSRQNVLLVPQEGVTHNAQGKATALILDKDDVVKLREIEASKAIGDQWVVTSGLQAGDRVIVSGLQRIRPGIKARAISSSQENASTESKQ.

An N-terminal signal peptide occupies residues Met-1–Ala-20. The N-palmitoyl cysteine moiety is linked to residue Cys-21. Cys-21 carries S-diacylglycerol cysteine lipidation.

It belongs to the membrane fusion protein (MFP) (TC 8.A.1) family. As to quaternary structure, homotrimer. Part of the tripartite efflux system MdtEF-TolC, which is composed of an inner membrane transporter, MdtF, a membrane fusion protein, MdtE, and an outer membrane component, TolC. The complex forms a large protein conduit and can translocate molecules across both the inner and outer membranes.

It localises to the cell inner membrane. In terms of biological role, part of the tripartite efflux system MdtEF-TolC, which confers resistance to various compounds. The polypeptide is Multidrug resistance protein MdtE (mdtE) (Escherichia coli O157:H7).